Here is a 154-residue protein sequence, read N- to C-terminus: Putative pre-16S rRNA nuclease (154 aa).

Belongs to the YqgF nuclease family.

It localises to the cytoplasm. Its function is as follows. Could be a nuclease involved in processing of the 5'-end of pre-16S rRNA. This is Putative pre-16S rRNA nuclease from Ruegeria pomeroyi (strain ATCC 700808 / DSM 15171 / DSS-3) (Silicibacter pomeroyi).